A 568-amino-acid polypeptide reads, in one-letter code: MKFDKYEYLQDLMRRRGFAWGSFEIYGGARGFYDYGPLGATIKRKIEKKIREAFIREGFFEIETPDITPEQVFIASGHVEKFVDPLVECKKCGARFRADHLIEETLGIDVEGKSAEEMTKIIREHNIRCPECGGELSDVWYFNLMFETYIGPYKDKKAYLRPETAQGIFVNFKRLNAFARNKLPFGVFQIGKAYRNEISPRQGMIRLREFTQAEVEIFFNPNETEHPHFDEVKDEVLRLYPIEHQLKDLGMIELTAEEAVKKGYVMNTFFAYYMVMIKRILLDIGIPEDKIRFRQQLPEERAHYSADTWDAEIYSERFGWVECVGLAYRTDYDLSRHMKMSGADLTVMIHYDKPKIVKKLNVTLNMKKVGPKLKEKVKEINEKLKSMSQEELRKLVEELNANGKVIIEGHELEKEDLIIKEVEEKIQGEKIVPHVLEPSFGIDRPFYLLLENSLTVDEDGRVYLKIKKDMAPIEVAVLPLVAKEPLTTIAYEIYRNLQKEGFIVVYDEKDSIGKRYMRYDEIGTPYCVTVDNQTPEDGTVTIRDRDTREQIRVKIEEVPRKLKELIFG.

Substrate is bound by residues R97 and E163. Residues 195–197 (RNE), 205–210 (IRLREF), 322–323 (EC), and 441–444 (GIDR) contribute to the ATP site. Substrate is bound at residue 210–214 (FTQAE). 437-441 (EPSFG) serves as a coordination point for substrate.

The protein belongs to the class-II aminoacyl-tRNA synthetase family.

The protein localises to the cytoplasm. It catalyses the reaction tRNA(Gly) + glycine + ATP = glycyl-tRNA(Gly) + AMP + diphosphate. Its function is as follows. Catalyzes the attachment of glycine to tRNA(Gly). The protein is Glycine--tRNA ligase of Pyrococcus furiosus (strain ATCC 43587 / DSM 3638 / JCM 8422 / Vc1).